The following is a 137-amino-acid chain: Large ribosomal subunit protein uL16 (137 aa).

Belongs to the universal ribosomal protein uL16 family. In terms of assembly, part of the 50S ribosomal subunit.

Functionally, binds 23S rRNA and is also seen to make contacts with the A and possibly P site tRNAs. In Pseudomonas paraeruginosa (strain DSM 24068 / PA7) (Pseudomonas aeruginosa (strain PA7)), this protein is Large ribosomal subunit protein uL16.